We begin with the raw amino-acid sequence, 706 residues long: Gamma-adducin (706 aa).

Positions Met1 to Thr11 are enriched in low complexity. Residues Met1 to Arg23 form a disordered region. The residue at position 2 (Ser2) is an N-acetylserine. A phosphoserine mark is found at Ser31, Ser42, Ser64, Ser402, Ser414, Ser423, Ser442, and Ser461. Disordered stretches follow at residues Ala471–Asn495, Pro534–His556, Gln574–Glu610, and Thr651–Ala706. Residue Lys484 forms a Glycyl lysine isopeptide (Lys-Gly) (interchain with G-Cter in SUMO2) linkage. Phosphoserine occurs at positions 583, 585, and 590. Low complexity-rich tracts occupy residues Ser590–Pro605 and Thr651–Ile662. A phosphoserine mark is found at Ser673, Ser677, Ser679, Ser681, and Ser683. Residues Pro682–Ala706 are compositionally biased toward basic residues. An interaction with calmodulin region spans residues Lys684–Lys701.

It belongs to the aldolase class II family. Adducin subfamily. In terms of assembly, heterodimer of an alpha and a gamma subunit. In terms of processing, sumoylated. Post-translationally, proteolytically cleaved by asparagine endopeptidase (AEP) into 2 fragments. Overexpression of the 1-357 fragment induces neuronal apoptosis, and overexpression of either 1-357 or 358-706 fragment increases the degeneration of dendritic spines. Overexpression of the 1-357 fragment impairs neurite outgrowth by downregulating the expression of Rac2, and induces synaptic dysfunction and cognitive impairments in tau P301S transgenic mice, a mouse model for Alzheimer disease (AD). Cleavage fragment 1-357 is expressed in the brain and the expression increases with age (at protein level). The fragment is expressed in the cortex, hippocampal CA1 region and hippocampal dentate gyrus in tau P301S transgenic mice, a mouse model for Alzheimer disease (AD) (at protein level). The fragment is only weakly expressed in non-transgenic mouse brain sections (at protein level).

The protein localises to the cytoplasm. It localises to the cytoskeleton. It is found in the cell membrane. Membrane-cytoskeleton-associated protein that promotes the assembly of the spectrin-actin network. Plays a role in actin filament capping. Binds to calmodulin. Involved in myogenic reactivity of the renal afferent arteriole (Af-art), renal interlobular arteries and middle cerebral artery (MCA) to increased perfusion pressure. Involved in regulation of potassium channels in the vascular smooth muscle cells (VSMCs) of the Af-art and MCA ex vivo. Involved in regulation of glomerular capillary pressure, glomerular filtration rate (GFR) and glomerular nephrin expression in response to hypertension. Involved in renal blood flow (RBF) autoregulation. Plays a role in podocyte structure and function. Regulates globular monomer actin (G-actin) and filamentous polymer actin (F-actin) ratios in the primary podocytes affecting actin cytoskeleton organization. Regulates expression of synaptopodin, RhoA, Rac1 and CDC42 in the renal cortex and the primary podocytes. Regulates expression of nephrin in the glomeruli and in the primary podocytes, expression of nephrin and podocinin in the renal cortex, and expression of focal adhesion proteins integrin alpha-3 and integrin beta-1 in the glomeruli. Involved in cell migration and cell adhesion of podocytes, and in podocyte foot process effacement. Regulates expression of profibrotics markers MMP2, MMP9, TGF beta-1, tubular tight junction protein E-cadherin, and mesenchymal markers vimentin and alpha-SMA. Promotes the growth of neurites. This chain is Gamma-adducin (Add3), found in Mus musculus (Mouse).